The primary structure comprises 539 residues: 3-methylmercaptopropionyl-CoA ligase (539 aa).

Position 185 (T185) interacts with Mg(2+). H231, G303, H324, A325, and S329 together coordinate ATP. A Mg(2+)-binding site is contributed by E330. 4 residues coordinate ATP: Q359, D417, R432, and K523.

Belongs to the ATP-dependent AMP-binding enzyme family. In terms of assembly, homodimer. Mg(2+) serves as cofactor.

The enzyme catalyses 3-(methylsulfanyl)propanoate + ATP + CoA = 3-(methylsulfanyl)propanoyl-CoA + AMP + diphosphate. Its pathway is lipid metabolism; fatty acid metabolism. Activated by LiCl and NH(4)Cl. Inhibited by dimethylsulfoniopropionate (DMSP). MMPA concentrations above 2 mM relieve the DMSP inhibition and 80% of activity is regained at an MMPA concentration of 8 mM. In terms of biological role, involved in the assimilation of dimethylsulphoniopropionate (DMSP), an important compound in the fixation of carbon in marine phytoplankton. Catalyzes the ATP-dependent ligation of methylmercaptopropionate (MMPA) and CoA to yield methylmercaptopropionate-CoA (MMPA-CoA). It is also active with short-chain-fatty-acid (carboxylic acids up to six carbons in length). The polypeptide is 3-methylmercaptopropionyl-CoA ligase (Ruegeria pomeroyi (strain ATCC 700808 / DSM 15171 / DSS-3) (Silicibacter pomeroyi)).